The following is a 460-amino-acid chain: Protein unc-93 homolog A (460 aa).

5 helical membrane-spanning segments follow: residues 7 to 27, 41 to 61, 68 to 88, 89 to 109, and 139 to 159; these read ILIVSFGFLLLFTAFGGLQSL, SLSVIYAALIVSSVFVPPIVI, WTIVASMCCYITYSLGNFYAS, WYTLIPTSLILGFGGAPLWAA, and LFFLIFQSSGVWGNLISSLIF. N-linked (GlcNAc...) asparagine glycans are attached at residues asparagine 168 and asparagine 189. The next 6 membrane-spanning stretches (helical) occupy residues 203 to 223, 292 to 312, 321 to 341, 345 to 365, 390 to 410, and 412 to 432; these read TLLGVYTGSGVLAVILIAVFL, FVGYVMICFAATNAVCSLLFG, ICLFILAAVSNAACVIALLLW, PNDFAVFFIFPAIWGMADAIW, LWESLGFVIAYGYSTFLCVSV, and LYILLAVLLIAIVFYGFVEYL.

This sequence belongs to the unc-93 family.

Its subcellular location is the membrane. This chain is Protein unc-93 homolog A (unc93a), found in Xenopus laevis (African clawed frog).